The chain runs to 725 residues: uncharacterized protein (725 aa).

One can recognise a FtsK domain in the interval 363–556 (GTYVEIPLYS…FVTTRPEDSC (194 aa)). Residue 382-389 (GRTRGGKS) coordinates ATP.

It belongs to the FtsK/SpoIIIE/SftA family.

Its function is as follows. Probable DNA motor protein. May track DNA in a ATP-dependent manner by generating positive supercoils in front of it and negative supercoils behind it. This is an uncharacterized protein from Nostoc sp. (strain PCC 7120 / SAG 25.82 / UTEX 2576).